The primary structure comprises 225 residues: Transcriptional activator protein CUP2 (225 aa).

Positions 1–40 (MVVINGVKYACETCIRGHRAAQCTHTDGPLQMIRRKGRPS) form a DNA-binding region, copper-fist. The tract at residues 1–108 (MVVINGVKYA…KSKGGSCHRR (108 aa)) is binds copper and DNA. Zn(2+) contacts are provided by cysteine 11, cysteine 14, cysteine 23, and histidine 25. The segment at 109–225 (ANDEAAHVNG…QVSSHNSHSQ (117 aa)) is required for transcriptional activation.

Its subcellular location is the nucleus. In terms of biological role, trans-acting regulatory protein that activates transcription of the CUP1 gene (metallothionein) in response to copper ions. Binds to the CUP1 UAS sequence 5'-GCTTCTTTTCCGCTGA-3'. Binds DNA only in presence of copper or silver. Copper seems to alter the conformation of the protein. The polypeptide is Transcriptional activator protein CUP2 (CUP2) (Saccharomyces cerevisiae (strain ATCC 204508 / S288c) (Baker's yeast)).